The following is a 116-amino-acid chain: Ribonuclease P protein component (116 aa).

This sequence belongs to the RnpA family. In terms of assembly, consists of a catalytic RNA component (M1 or rnpB) and a protein subunit.

It catalyses the reaction Endonucleolytic cleavage of RNA, removing 5'-extranucleotides from tRNA precursor.. Functionally, RNaseP catalyzes the removal of the 5'-leader sequence from pre-tRNA to produce the mature 5'-terminus. It can also cleave other RNA substrates such as 4.5S RNA. The protein component plays an auxiliary but essential role in vivo by binding to the 5'-leader sequence and broadening the substrate specificity of the ribozyme. The protein is Ribonuclease P protein component of Leuconostoc mesenteroides subsp. mesenteroides (strain ATCC 8293 / DSM 20343 / BCRC 11652 / CCM 1803 / JCM 6124 / NCDO 523 / NBRC 100496 / NCIMB 8023 / NCTC 12954 / NRRL B-1118 / 37Y).